The following is a 201-amino-acid chain: Small ribosomal subunit protein uS4c (201 aa).

The disordered stretch occupies residues 16-43; that stretch reads GALPGLTSKKPRSASDLRNQSRSGKRSQ. One can recognise an S4 RNA-binding domain in the interval 89–169; sequence MRLDNILFRL…LPKHLTLHSF (81 aa).

It belongs to the universal ribosomal protein uS4 family. As to quaternary structure, part of the 30S ribosomal subunit. Contacts protein S5. The interaction surface between S4 and S5 is involved in control of translational fidelity.

Its subcellular location is the plastid. It localises to the chloroplast. Functionally, one of the primary rRNA binding proteins, it binds directly to 16S rRNA where it nucleates assembly of the body of the 30S subunit. In terms of biological role, with S5 and S12 plays an important role in translational accuracy. In Nymphaea alba (White water-lily), this protein is Small ribosomal subunit protein uS4c (rps4).